A 215-amino-acid polypeptide reads, in one-letter code: Cytochrome b6 (215 aa).

Residues 32 to 52 (IFYCLGGITLTCFLVQVATGF) traverse the membrane as a helical segment. Cysteine 35 is a binding site for heme c. The heme b site is built by histidine 86 and histidine 100. Helical transmembrane passes span 90 to 110 (ASMM…TGGF), 116 to 136 (LTWV…VTGY), and 186 to 206 (LHTF…FLMI). Residues histidine 187 and histidine 202 each contribute to the heme b site.

The protein belongs to the cytochrome b family. PetB subfamily. The 4 large subunits of the cytochrome b6-f complex are cytochrome b6, subunit IV (17 kDa polypeptide, PetD), cytochrome f and the Rieske protein, while the 4 small subunits are PetG, PetL, PetM and PetN. The complex functions as a dimer. It depends on heme b as a cofactor. The cofactor is heme c.

It localises to the plastid. Its subcellular location is the chloroplast thylakoid membrane. In terms of biological role, component of the cytochrome b6-f complex, which mediates electron transfer between photosystem II (PSII) and photosystem I (PSI), cyclic electron flow around PSI, and state transitions. The protein is Cytochrome b6 of Pisum sativum (Garden pea).